Here is a 418-residue protein sequence, read N- to C-terminus: MTIEATIVDIAKAAKKAALAMATCPTDKKNQALLALADRLHKDAALIQAENKKDLEAAKATGLSSAMIDRLTVSDAVIASMADGLREVAALPDPVGAKSATWRRPNGLEVARMRIPLGVIGIIYESRPNVTVDAAGLCLKAGNTVILRGGSEALHSNRALAATISASLAESGLPETAVQVVPVADREAVTHLLAQEEYIDLIIPRGGEGLIRFVVQHSSIPVLKHYKGVCHVYVDQDADMEMARAICFNAKVQRPGVCNAMETLLVHRDAAQRFLPDMARQFADAGVALRGCAATRALLPGIETAEEADWYAEYLDLILAVKVVDSMDAAISHIATYGSSHTEVIVTNSYDRAMRFLAAVDSSVVLVNASTRFNDGGQLGLGAEIGISTSKLHAFGPMGLEELTTTKFIVLGNGQIRE.

This sequence belongs to the gamma-glutamyl phosphate reductase family.

The protein resides in the cytoplasm. It carries out the reaction L-glutamate 5-semialdehyde + phosphate + NADP(+) = L-glutamyl 5-phosphate + NADPH + H(+). Its pathway is amino-acid biosynthesis; L-proline biosynthesis; L-glutamate 5-semialdehyde from L-glutamate: step 2/2. Catalyzes the NADPH-dependent reduction of L-glutamate 5-phosphate into L-glutamate 5-semialdehyde and phosphate. The product spontaneously undergoes cyclization to form 1-pyrroline-5-carboxylate. This chain is Gamma-glutamyl phosphate reductase, found in Desulfosudis oleivorans (strain DSM 6200 / JCM 39069 / Hxd3) (Desulfococcus oleovorans).